We begin with the raw amino-acid sequence, 1370 residues long: DNA-directed RNA polymerase subunit beta (1370 aa).

This sequence belongs to the RNA polymerase beta chain family. In terms of assembly, the RNAP catalytic core consists of 2 alpha, 1 beta, 1 beta' and 1 omega subunit. When a sigma factor is associated with the core the holoenzyme is formed, which can initiate transcription.

The catalysed reaction is RNA(n) + a ribonucleoside 5'-triphosphate = RNA(n+1) + diphosphate. In terms of biological role, DNA-dependent RNA polymerase catalyzes the transcription of DNA into RNA using the four ribonucleoside triphosphates as substrates. The sequence is that of DNA-directed RNA polymerase subunit beta from Geobacter sulfurreducens (strain ATCC 51573 / DSM 12127 / PCA).